We begin with the raw amino-acid sequence, 425 residues long: 3-isopropylmalate dehydratase large subunit (425 aa).

Residues Cys306, Cys366, and Cys369 each contribute to the [4Fe-4S] cluster site.

The protein belongs to the aconitase/IPM isomerase family. LeuC type 2 subfamily. As to quaternary structure, heterodimer of LeuC and LeuD. [4Fe-4S] cluster is required as a cofactor.

It carries out the reaction (2R,3S)-3-isopropylmalate = (2S)-2-isopropylmalate. The protein operates within amino-acid biosynthesis; L-leucine biosynthesis; L-leucine from 3-methyl-2-oxobutanoate: step 2/4. Its function is as follows. Catalyzes the isomerization between 2-isopropylmalate and 3-isopropylmalate, via the formation of 2-isopropylmaleate. This chain is 3-isopropylmalate dehydratase large subunit, found in Nautilia profundicola (strain ATCC BAA-1463 / DSM 18972 / AmH).